Here is a 297-residue protein sequence, read N- to C-terminus: MTEVIDGNAVASDIRDDLTDAIATLADAGARPGLATVLMGDDPASETYVNMKQRDCEEVGIESYHVDVDGDAPPETLYDEIAALNQNDDVHGYIVQAPVPDHVDYREVIRRVDPQKDVDGFHPENVGRLVAGDARFRPCTPHGVQKLLEAADIDTEGKDVTIVGRSDIVGKPLANLLIQKADDGNATVTVCHSRTENLAAKTRRADIVVAAAGAPELVDGSMIGEGSVVIDVGVNRVDADNEKGYELVGDVEYESATQNASAITPVPGGVGPMTRAMLLYNTVKAASLQEDIDVALP.

NADP(+) contacts are provided by residues G164 to S166, S193, and V234.

It belongs to the tetrahydrofolate dehydrogenase/cyclohydrolase family. In terms of assembly, homodimer.

The enzyme catalyses (6R)-5,10-methylene-5,6,7,8-tetrahydrofolate + NADP(+) = (6R)-5,10-methenyltetrahydrofolate + NADPH. It catalyses the reaction (6R)-5,10-methenyltetrahydrofolate + H2O = (6R)-10-formyltetrahydrofolate + H(+). It functions in the pathway one-carbon metabolism; tetrahydrofolate interconversion. Catalyzes the oxidation of 5,10-methylenetetrahydrofolate to 5,10-methenyltetrahydrofolate and then the hydrolysis of 5,10-methenyltetrahydrofolate to 10-formyltetrahydrofolate. This is Bifunctional protein FolD from Natronomonas pharaonis (strain ATCC 35678 / DSM 2160 / CIP 103997 / JCM 8858 / NBRC 14720 / NCIMB 2260 / Gabara) (Halobacterium pharaonis).